We begin with the raw amino-acid sequence, 215 residues long: MDLYNMSGSPSTRAVMMTAKAVGVEFNSIQVNTFVGEQLEPWFVKINPQHTIPTLVDNLFVIWETRAIVVYLVEQYGKDDSLYPKDPQKQALINQRLYFDMGTLYDGIAKYFFPLLRTGKPGTQENLEKLNAAFDLLNNFLDGQDYVAGNQLSVADIVILATVSTTEMVDFDLKKFPNVDRWYKNAQKVTPGWDENLARIQSAKKFLAENLIEKL.

The 80-residue stretch at 1-80 folds into the GST N-terminal domain; it reads MDLYNMSGSP…YLVEQYGKDD (80 aa). Glutathione is bound by residues Ser-9, 50 to 52, and 64 to 66; these read HTI and ETR. The GST C-terminal domain maps to 86-206; the sequence is DPQKQALINQ…LARIQSAKKF (121 aa).

Belongs to the GST superfamily. Delta family. As to quaternary structure, homodimer.

The enzyme catalyses RX + glutathione = an S-substituted glutathione + a halide anion + H(+). Functionally, conjugation of reduced glutathione to a wide number of exogenous and endogenous hydrophobic electrophiles. May be involved in detoxification. This chain is Glutathione S-transferase D6, found in Drosophila melanogaster (Fruit fly).